We begin with the raw amino-acid sequence, 155 residues long: Ribosomal RNA large subunit methyltransferase H (155 aa).

S-adenosyl-L-methionine is bound by residues Leu72, Gly103, and 122 to 127; that span reads LSDLTL.

This sequence belongs to the RNA methyltransferase RlmH family. As to quaternary structure, homodimer.

The protein resides in the cytoplasm. It carries out the reaction pseudouridine(1915) in 23S rRNA + S-adenosyl-L-methionine = N(3)-methylpseudouridine(1915) in 23S rRNA + S-adenosyl-L-homocysteine + H(+). Its function is as follows. Specifically methylates the pseudouridine at position 1915 (m3Psi1915) in 23S rRNA. The chain is Ribosomal RNA large subunit methyltransferase H from Acidovorax sp. (strain JS42).